Reading from the N-terminus, the 228-residue chain is Ion-translocating oxidoreductase complex subunit G (228 aa).

The helical transmembrane segment at 35 to 55 (ALSLGLVCALVAVALLLGNQL) threads the bilayer. Thr-197 bears the FMN phosphoryl threonine mark.

It belongs to the RnfG family. As to quaternary structure, the complex is composed of six subunits: RnfA, RnfB, RnfC, RnfD, RnfE and RnfG. FMN is required as a cofactor.

It localises to the cell inner membrane. Functionally, part of a membrane-bound complex that couples electron transfer with translocation of ions across the membrane. The protein is Ion-translocating oxidoreductase complex subunit G of Stutzerimonas stutzeri (Pseudomonas stutzeri).